The chain runs to 318 residues: uncharacterized protein (318 aa).

This sequence to A.aeolicus AA07 and AA34.

This is an uncharacterized protein from Aquifex aeolicus (strain VF5).